Consider the following 580-residue polypeptide: CRISPR-associated exonuclease Cas4/endonuclease Cas1 fusion (580 aa).

The interval 1–223 (MAPSDTPPSA…RCSLLPICLP (223 aa)) is CRISPR-associated exonuclease Cas4. Residue C44 participates in [4Fe-4S] cluster binding. Mn(2+) contacts are provided by D112 and E125. Residues C212, C215, and C221 each coordinate [4Fe-4S] cluster. The interval 248 to 580 (LYGQTPGARI…IPRYPHYCPR (333 aa)) is CRISPR-associated endonuclease Cas1. Mn(2+) is bound by residues E401, H472, and E487.

The protein in the N-terminal section; belongs to the CRISPR-associated exonuclease Cas4 family. This sequence in the C-terminal section; belongs to the CRISPR-associated endonuclease Cas1 family. Homodimer, forms a heterotetramer with a Cas2 homodimer. [4Fe-4S] cluster serves as cofactor. The cofactor is Mg(2+). Requires Mn(2+) as cofactor.

The catalysed reaction is exonucleolytic cleavage in the 5'- to 3'-direction to yield nucleoside 3'-phosphates.. Its function is as follows. CRISPR (clustered regularly interspaced short palindromic repeat), is an adaptive immune system that provides protection against mobile genetic elements (viruses, transposable elements and conjugative plasmids). CRISPR clusters contain spacers, sequences complementary to antecedent mobile elements, and target invading nucleic acids. CRISPR clusters are transcribed and processed into CRISPR RNA (crRNA). The Cas4 region acts as a ssDNA exonuclease, while the Cas1 region acts as a dsDNA endonuclease. Involved in the integration of spacer DNA into the CRISPR cassette. In Rhodospirillum rubrum (strain ATCC 11170 / ATH 1.1.1 / DSM 467 / LMG 4362 / NCIMB 8255 / S1), this protein is CRISPR-associated exonuclease Cas4/endonuclease Cas1 fusion (cas4-cas1).